Here is a 704-residue protein sequence, read N- to C-terminus: Elongation factor G (704 aa).

Residues Ala-8 to Val-290 form the tr-type G domain. GTP contacts are provided by residues Ala-17–Thr-24, Asp-88–His-92, and Asn-142–Asp-145.

This sequence belongs to the TRAFAC class translation factor GTPase superfamily. Classic translation factor GTPase family. EF-G/EF-2 subfamily.

It is found in the cytoplasm. Catalyzes the GTP-dependent ribosomal translocation step during translation elongation. During this step, the ribosome changes from the pre-translocational (PRE) to the post-translocational (POST) state as the newly formed A-site-bound peptidyl-tRNA and P-site-bound deacylated tRNA move to the P and E sites, respectively. Catalyzes the coordinated movement of the two tRNA molecules, the mRNA and conformational changes in the ribosome. The sequence is that of Elongation factor G from Salmonella agona (strain SL483).